An 87-amino-acid polypeptide reads, in one-letter code: Small ribosomal subunit protein bS20 (87 aa).

The tract at residues 1-26 (MANIKSAKKRAIQAEKARKHNASRRS) is disordered.

The protein belongs to the bacterial ribosomal protein bS20 family.

In terms of biological role, binds directly to 16S ribosomal RNA. The sequence is that of Small ribosomal subunit protein bS20 from Tolumonas auensis (strain DSM 9187 / NBRC 110442 / TA 4).